The sequence spans 245 residues: Large ribosomal subunit protein eL29 (245 aa).

The segment covering 1 to 26 (MAKSKNHTTHNQSRKWHRNGIKKPRS) has biased composition (basic residues). Disordered regions lie at residues 1–33 (MAKSKNHTTHNQSRKWHRNGIKKPRSQRYESLK) and 114–245 (RGLR…AKAP). K5 bears the N6-methyllysine mark. S31 bears the Phosphoserine mark. The residue at position 33 (K33) is an N6-acetyllysine. The segment covering 134-150 (KGKVKAQIKAQAQAQIK) has biased composition (low complexity). A compositionally biased stretch (basic and acidic residues) spans 157 to 171 (AQAETKPKAQAETKP). Composition is skewed to low complexity over residues 172 to 226 (KAQA…ATPA) and 234 to 245 (PPKGAQPPAKAP).

Belongs to the eukaryotic ribosomal protein eL29 family. As to quaternary structure, component of the large ribosomal subunit.

It localises to the cytoplasm. Component of the large ribosomal subunit. The ribosome is a large ribonucleoprotein complex responsible for the synthesis of proteins in the cell. The sequence is that of Large ribosomal subunit protein eL29 (RPL29) from Oryctolagus cuniculus (Rabbit).